The following is a 493-amino-acid chain: Angiopoietin-related protein 2 (493 aa).

Positions 1–22 are cleaved as a signal peptide; that stretch reads MRPLCVTCWWLGLLAAMGAVAG. Coiled-coil stretches lie at residues 76–115 and 152–206; these read PEVL…VDGG and ALEL…HCQR. 2 N-linked (GlcNAc...) asparagine glycosylation sites follow: asparagine 164 and asparagine 192. A Fibrinogen C-terminal domain is found at 269–489; the sequence is DKPSGPWRDC…KVVMMIRPNP (221 aa). Intrachain disulfides connect cysteine 278-cysteine 307 and cysteine 430-cysteine 443.

Post-translationally, N-glycosylated. In terms of tissue distribution, widely expressed in heart, small intestine, spleen and stomach. Also found in lower levels in colon, ovary, adrenal gland, skeletal muscle and in prostate.

Its subcellular location is the secreted. Functionally, induces sprouting in endothelial cells through an autocrine and paracrine action. The polypeptide is Angiopoietin-related protein 2 (ANGPTL2) (Homo sapiens (Human)).